The chain runs to 760 residues: H(+)/Cl(-) exchange transporter 4 (760 aa).

Residues 1-67 are Cytoplasmic-facing; that stretch reads MVNAGAMSGS…WEFIKSLLDA (67 aa). The interval 14 to 63 is required for localization in the endoplasmic reticulum; it reads MDFLDEPFPDVGTYEDFHTIDWLREKSRDTDRHRKITSKSKESIWEFIKS. A run of 2 helical transmembrane segments spans residues 68 to 105 and 151 to 174; these read WSGW…VCLS and LNYL…VRVF. A Selectivity filter part_1 motif is present at residues 180-184; that stretch reads GSGIP. Chloride is bound at residue serine 181. The segment at residues 183–190 is an intramembrane region (helical); the sequence is IPEIKTIL. A run of 2 helical transmembrane segments spans residues 200 to 218 and 224 to 243; these read GKWT…VSSG and EGPL…SLFS. The Selectivity filter part_2 signature appears at 222–226; the sequence is GKEGP. 2 intramembrane regions (helical) span residues 255-267 and 271-279; these read VLSA…VSVA and PIGGVLFSL. 5 helical membrane-spanning segments follow: residues 291-309, 333-358, 365-385, 442-462, and 467-486; these read LWRS…RSIN, FPFI…AWCR, LGKY…IIAY, MWQL…TFGM, and GLFI…VGIG. Residues 467–471 carry the Selectivity filter part_3 motif; it reads GLFIP. Phenylalanine 469 contacts chloride. 2 intramembrane regions (helical) span residues 514-528 and 532-543; these read GLYA…LGGV and TVSLVVIMFELT. An intramembrane region (note=Loop between two helices) is located at residues 544 to 547; sequence GGLE. Residues 548 to 566 traverse the membrane as a helical segment; sequence YIVPLMAAAVTSKWVADAF. The Cytoplasmic portion of the chain corresponds to 567–760; that stretch reads GKEGIYEAHI…NQDPESIMFN (194 aa). A chloride-binding site is contributed by tyrosine 572. Residues 600-666 enclose the CBS 1 domain; that stretch reads MRPRRGEPPL…AIKNARQRQE (67 aa). Residues serine 610 and 631–633 each bind ATP; that span reads YNG. The interval 667–696 is required for localization in the endoplasmic reticulum; sequence GIVSNSIMYFTEEPPELPANSPHPLKLRRI. The CBS 2 domain occupies 697 to 755; that stretch reads LNLSPFTVTDHTPMETVVDIFRKLGLRQCLVTRSGRLLGIITKKDVLRHMAQMANQDPE. 738-741 is an ATP binding site; that stretch reads TKKD.

Belongs to the chloride channel (TC 2.A.49) family. ClC-4/CLCN4 subfamily. In terms of assembly, monomer. Forms heterodimers with CLCN3. In terms of tissue distribution, abundant in skeletal muscle and also detectable in brain and heart.

Its subcellular location is the early endosome membrane. It is found in the late endosome membrane. The protein localises to the endoplasmic reticulum membrane. The protein resides in the lysosome membrane. It localises to the recycling endosome membrane. In terms of biological role, strongly outwardly rectifying, electrogenic H(+)/Cl(-)exchanger which mediates the exchange of chloride ions against protons. The CLC channel family contains both chloride channels and proton-coupled anion transporters that exchange chloride or another anion for protons. The presence of conserved gating glutamate residues is typical for family members that function as antiporters. This Homo sapiens (Human) protein is H(+)/Cl(-) exchange transporter 4 (CLCN4).